Reading from the N-terminus, the 705-residue chain is Ribonuclease R (705 aa).

The RNB domain occupies 240–567 (RRDLREQLCF…VHRLLKKALR (328 aa)). An S1 motif domain is found at 615–696 (GEEFIGIITG…ERARVEFELI (82 aa)).

This sequence belongs to the RNR ribonuclease family. RNase R subfamily.

It is found in the cytoplasm. The catalysed reaction is Exonucleolytic cleavage in the 3'- to 5'-direction to yield nucleoside 5'-phosphates.. 3'-5' exoribonuclease that releases 5'-nucleoside monophosphates and is involved in maturation of structured RNAs. This chain is Ribonuclease R, found in Aquifex aeolicus (strain VF5).